A 191-amino-acid polypeptide reads, in one-letter code: Potassium-transporting ATPase KdpC subunit (191 aa).

Residues 10–30 (ITLVFCVFFSVFYILVLWLFA) form a helical membrane-spanning segment.

It belongs to the KdpC family. As to quaternary structure, the system is composed of three essential subunits: KdpA, KdpB and KdpC.

It is found in the cell inner membrane. Its function is as follows. Part of the high-affinity ATP-driven potassium transport (or Kdp) system, which catalyzes the hydrolysis of ATP coupled with the electrogenic transport of potassium into the cytoplasm. This subunit acts as a catalytic chaperone that increases the ATP-binding affinity of the ATP-hydrolyzing subunit KdpB by the formation of a transient KdpB/KdpC/ATP ternary complex. This Bacteroides fragilis (strain YCH46) protein is Potassium-transporting ATPase KdpC subunit.